Reading from the N-terminus, the 340-residue chain is Porphobilinogen deaminase (340 aa).

Cys-258 carries the S-(dipyrrolylmethanemethyl)cysteine modification.

It belongs to the HMBS family. The cofactor is dipyrromethane.

It catalyses the reaction 4 porphobilinogen + H2O = hydroxymethylbilane + 4 NH4(+). Its pathway is porphyrin-containing compound metabolism; protoporphyrin-IX biosynthesis; coproporphyrinogen-III from 5-aminolevulinate: step 2/4. Its function is as follows. Tetrapolymerization of the monopyrrole PBG into the hydroxymethylbilane pre-uroporphyrinogen in several discrete steps. The sequence is that of Porphobilinogen deaminase (HEM3) from Candida albicans (strain SC5314 / ATCC MYA-2876) (Yeast).